A 219-amino-acid chain; its full sequence is 7-cyano-7-deazaguanine synthase (219 aa).

Residue 10–20 (FSGGQDSTTCL) coordinates ATP. The Zn(2+) site is built by Cys188, Cys196, Cys199, and Cys202.

This sequence belongs to the QueC family. Requires Zn(2+) as cofactor.

The catalysed reaction is 7-carboxy-7-deazaguanine + NH4(+) + ATP = 7-cyano-7-deazaguanine + ADP + phosphate + H2O + H(+). Its pathway is purine metabolism; 7-cyano-7-deazaguanine biosynthesis. Its function is as follows. Catalyzes the ATP-dependent conversion of 7-carboxy-7-deazaguanine (CDG) to 7-cyano-7-deazaguanine (preQ(0)). This is 7-cyano-7-deazaguanine synthase from Neisseria gonorrhoeae (strain NCCP11945).